Reading from the N-terminus, the 1394-residue chain is ABC transporter patM (1394 aa).

Positions 1-41 are disordered; it reads MVDNYHSSLDVAKTPIQSDADAQKSEAETEGPSSKSSQIAA. The 244-residue stretch at 98–341 folds into the ABC transporter 1 domain; it reads SPLQNRQRKQ…FEDLGFECLS (244 aa). 6 helical membrane passes run 437 to 457, 467 to 487, 511 to 531, 546 to 566, 579 to 599, and 688 to 708; these read SLWA…GTLF, LFIF…QSMA, IAYA…AICY, GNFF…SMFF, AVLP…LYVP, and VGIN…GMEM. The interval 727–755 is disordered; it reads VTHRRDKIDSETGQDQGNESSEMSAGQSN. Positions 737-755 are enriched in polar residues; it reads ETGQDQGNESSEMSAGQSN. Residues 767 to 1013 form the ABC transporter 2 domain; that stretch reads DKSHNLAWTN…EAIQYFQPRS (247 aa). Position 808–815 (808–815) interacts with ATP; that stretch reads GVSGAGKT. Helical transmembrane passes span 1131–1151, 1177–1197, 1219–1239, 1245–1265, 1280–1300, and 1368–1388; these read GAYN…PLGL, LAFV…SSLV, FLMY…CASL, AAFA…GTLS, ISPL…DLPI, and IGVF…MTYL.

Belongs to the ABC transporter superfamily. ABCG family. PDR (TC 3.A.1.205) subfamily.

It is found in the vacuole membrane. The protein resides in the cell membrane. It participates in mycotoxin biosynthesis; patulin biosynthesis. Its function is as follows. ABC transporter; part of the gene cluster that mediates the biosynthesis of patulin, an acetate-derived tetraketide mycotoxin produced by several fungal species that shows antimicrobial properties against several bacteria. May be involved in the secretion of E-ascladiol to be converted to patulin by the secreted patulin synthase patE. The polypeptide is ABC transporter patM (Penicillium expansum (Blue mold rot fungus)).